We begin with the raw amino-acid sequence, 314 residues long: 4-hydroxy-3-methylbut-2-enyl diphosphate reductase (314 aa).

Residue cysteine 12 coordinates [4Fe-4S] cluster. (2E)-4-hydroxy-3-methylbut-2-enyl diphosphate-binding residues include histidine 41 and histidine 74. Residues histidine 41 and histidine 74 each contribute to the dimethylallyl diphosphate site. Residues histidine 41 and histidine 74 each contribute to the isopentenyl diphosphate site. Residue cysteine 96 participates in [4Fe-4S] cluster binding. Histidine 124 is a (2E)-4-hydroxy-3-methylbut-2-enyl diphosphate binding site. Position 124 (histidine 124) interacts with dimethylallyl diphosphate. Position 124 (histidine 124) interacts with isopentenyl diphosphate. Catalysis depends on glutamate 126, which acts as the Proton donor. Threonine 167 contributes to the (2E)-4-hydroxy-3-methylbut-2-enyl diphosphate binding site. Cysteine 197 contacts [4Fe-4S] cluster. Residues serine 225, serine 226, asparagine 227, and serine 269 each coordinate (2E)-4-hydroxy-3-methylbut-2-enyl diphosphate. The dimethylallyl diphosphate site is built by serine 225, serine 226, asparagine 227, and serine 269. Serine 225, serine 226, asparagine 227, and serine 269 together coordinate isopentenyl diphosphate.

It belongs to the IspH family. The cofactor is [4Fe-4S] cluster.

It catalyses the reaction isopentenyl diphosphate + 2 oxidized [2Fe-2S]-[ferredoxin] + H2O = (2E)-4-hydroxy-3-methylbut-2-enyl diphosphate + 2 reduced [2Fe-2S]-[ferredoxin] + 2 H(+). It carries out the reaction dimethylallyl diphosphate + 2 oxidized [2Fe-2S]-[ferredoxin] + H2O = (2E)-4-hydroxy-3-methylbut-2-enyl diphosphate + 2 reduced [2Fe-2S]-[ferredoxin] + 2 H(+). It functions in the pathway isoprenoid biosynthesis; dimethylallyl diphosphate biosynthesis; dimethylallyl diphosphate from (2E)-4-hydroxy-3-methylbutenyl diphosphate: step 1/1. The protein operates within isoprenoid biosynthesis; isopentenyl diphosphate biosynthesis via DXP pathway; isopentenyl diphosphate from 1-deoxy-D-xylulose 5-phosphate: step 6/6. Functionally, catalyzes the conversion of 1-hydroxy-2-methyl-2-(E)-butenyl 4-diphosphate (HMBPP) into a mixture of isopentenyl diphosphate (IPP) and dimethylallyl diphosphate (DMAPP). Acts in the terminal step of the DOXP/MEP pathway for isoprenoid precursor biosynthesis. This is 4-hydroxy-3-methylbut-2-enyl diphosphate reductase from Actinobacillus pleuropneumoniae serotype 7 (strain AP76).